A 1033-amino-acid polypeptide reads, in one-letter code: Isoleucine--tRNA ligase 2 (1033 aa).

Residues 47–57 (PTANGLPHVGH) carry the 'HIGH' region motif. The short motif at 590 to 594 (KMSKS) is the 'KMSKS' region element. K593 contacts ATP.

Belongs to the class-I aminoacyl-tRNA synthetase family. IleS type 2 subfamily. In terms of assembly, monomer. Zn(2+) is required as a cofactor.

It is found in the cytoplasm. The catalysed reaction is tRNA(Ile) + L-isoleucine + ATP = L-isoleucyl-tRNA(Ile) + AMP + diphosphate. Its function is as follows. Catalyzes the attachment of isoleucine to tRNA(Ile). As IleRS can inadvertently accommodate and process structurally similar amino acids such as valine, to avoid such errors it has two additional distinct tRNA(Ile)-dependent editing activities. One activity is designated as 'pretransfer' editing and involves the hydrolysis of activated Val-AMP. The other activity is designated 'posttransfer' editing and involves deacylation of mischarged Val-tRNA(Ile). The protein is Isoleucine--tRNA ligase 2 of Bacillus cereus (strain ATCC 14579 / DSM 31 / CCUG 7414 / JCM 2152 / NBRC 15305 / NCIMB 9373 / NCTC 2599 / NRRL B-3711).